Reading from the N-terminus, the 729-residue chain is Fatty acid oxidation complex subunit alpha (729 aa).

The interval 1–189 (MLYKGDTLYL…KIGLVDGVVK (189 aa)) is enoyl-CoA hydratase/isomerase. Substrate is bound at residue D296. The segment at 311–729 (ETPKQAAVLG…ARPVGDLKTA (419 aa)) is 3-hydroxyacyl-CoA dehydrogenase. NAD(+)-binding positions include M324, D343, 400 to 402 (IVE), K407, and S429. H450 (for 3-hydroxyacyl-CoA dehydrogenase activity) is an active-site residue. Position 453 (N453) interacts with NAD(+). Substrate is bound by residues N500 and Y660. The disordered stretch occupies residues 708-729 (RHNEPYYPPVEPARPVGDLKTA).

In the N-terminal section; belongs to the enoyl-CoA hydratase/isomerase family. This sequence in the C-terminal section; belongs to the 3-hydroxyacyl-CoA dehydrogenase family. As to quaternary structure, heterotetramer of two alpha chains (FadB) and two beta chains (FadA).

The catalysed reaction is a (3S)-3-hydroxyacyl-CoA + NAD(+) = a 3-oxoacyl-CoA + NADH + H(+). It catalyses the reaction a (3S)-3-hydroxyacyl-CoA = a (2E)-enoyl-CoA + H2O. The enzyme catalyses a 4-saturated-(3S)-3-hydroxyacyl-CoA = a (3E)-enoyl-CoA + H2O. It carries out the reaction (3S)-3-hydroxybutanoyl-CoA = (3R)-3-hydroxybutanoyl-CoA. The catalysed reaction is a (3Z)-enoyl-CoA = a 4-saturated (2E)-enoyl-CoA. It catalyses the reaction a (3E)-enoyl-CoA = a 4-saturated (2E)-enoyl-CoA. The protein operates within lipid metabolism; fatty acid beta-oxidation. Functionally, involved in the aerobic and anaerobic degradation of long-chain fatty acids via beta-oxidation cycle. Catalyzes the formation of 3-oxoacyl-CoA from enoyl-CoA via L-3-hydroxyacyl-CoA. It can also use D-3-hydroxyacyl-CoA and cis-3-enoyl-CoA as substrate. This chain is Fatty acid oxidation complex subunit alpha, found in Escherichia coli O157:H7.